We begin with the raw amino-acid sequence, 339 residues long: Phosphate acyltransferase (339 aa).

The protein belongs to the PlsX family. As to quaternary structure, homodimer. Probably interacts with PlsY.

Its subcellular location is the cytoplasm. The catalysed reaction is a fatty acyl-[ACP] + phosphate = an acyl phosphate + holo-[ACP]. It functions in the pathway lipid metabolism; phospholipid metabolism. Its function is as follows. Catalyzes the reversible formation of acyl-phosphate (acyl-PO(4)) from acyl-[acyl-carrier-protein] (acyl-ACP). This enzyme utilizes acyl-ACP as fatty acyl donor, but not acyl-CoA. This is Phosphate acyltransferase from Helicobacter pylori (strain Shi470).